The following is a 71-amino-acid chain: Protein PSY3 (71 aa).

Positions 1–25 (MGYSSSSRIGLCLFLFFTFALLSSA) are cleaved as a signal peptide. Positions 26–49 (RISLSFSENEMTVVPERSLMVSTN) are excised as a propeptide. Positions 47–71 (STNDYSDPTANGRHDPPRGGRGRRR) are disordered. Tyrosine 51 carries the post-translational modification Sulfotyrosine. 4-hydroxyproline is present on proline 63. Residue proline 63 is glycosylated (O-linked (Ara...) hydroxyproline). A propeptide spanning residues 66 to 71 (GRGRRR) is cleaved from the precursor.

The protein belongs to the sulfated-peptide plant hormone family. Post-translationally, the sulfation and the glycosylation are required for full activity.

It is found in the secreted. Promotes cellular proliferation and expansion. This Arabidopsis thaliana (Mouse-ear cress) protein is Protein PSY3 (PSY3).